Reading from the N-terminus, the 349-residue chain is Anthranilate phosphoribosyltransferase (349 aa).

Residues G82, 85-86 (GD), 92-95 (NVST), 110-118 (KHGNRAVSG), and S122 each bind 5-phospho-alpha-D-ribose 1-diphosphate. Anthranilate is bound at residue G82. S94 lines the Mg(2+) pocket. An anthranilate-binding site is contributed by N113. R168 lines the anthranilate pocket. Mg(2+)-binding residues include D227 and E228.

The protein belongs to the anthranilate phosphoribosyltransferase family. As to quaternary structure, homodimer. Mg(2+) serves as cofactor.

It catalyses the reaction N-(5-phospho-beta-D-ribosyl)anthranilate + diphosphate = 5-phospho-alpha-D-ribose 1-diphosphate + anthranilate. Its pathway is amino-acid biosynthesis; L-tryptophan biosynthesis; L-tryptophan from chorismate: step 2/5. Functionally, catalyzes the transfer of the phosphoribosyl group of 5-phosphorylribose-1-pyrophosphate (PRPP) to anthranilate to yield N-(5'-phosphoribosyl)-anthranilate (PRA). This Pseudomonas putida (strain ATCC 700007 / DSM 6899 / JCM 31910 / BCRC 17059 / LMG 24140 / F1) protein is Anthranilate phosphoribosyltransferase.